Consider the following 152-residue polypeptide: MYAIIRIRGRTGIKKNIADTLDMLNLTRISHAVVIPETPSYKGMLQKAKDYITWGEVSEDTFKLLVSERGRLPGNKRVTDEYVKENTDYDSVEALAVAIYNEETTLKDSGLKPLFRLNPPRKGYENTKKTFVEGGSLGYRSEEINELLEKMI.

Belongs to the universal ribosomal protein uL30 family. As to quaternary structure, part of the 50S ribosomal subunit.

In Methanosphaera stadtmanae (strain ATCC 43021 / DSM 3091 / JCM 11832 / MCB-3), this protein is Large ribosomal subunit protein uL30.